Here is a 214-residue protein sequence, read N- to C-terminus: Scytalone dehydratase-like protein mdpB (214 aa).

Substrate is bound by residues Tyr-40 and Tyr-60. Residues His-95 and His-120 contribute to the active site.

This sequence belongs to the scytalone dehydratase family.

It functions in the pathway secondary metabolite biosynthesis. In terms of biological role, scytalone dehydratase-like protein; part of the gene cluster that mediates the biosynthesis of monodictyphenone, a prenyl xanthone derivative. The pathway begins with the synthesis of atrochrysone thioester by the polyketide synthase (PKS) mdpG. The atrochrysone carboxyl ACP thioesterase mdpF then breaks the thioester bond and releases the atrochrysone carboxylic acid from mdpG. The atrochrysone carboxylic acid is then converted to atrochrysone which is further transformed into emodin anthrone. The next step is performed by the anthrone oxygenase mdpH that catalyzes the oxidation of emodinanthrone to emodin. Emodin is further modified to yield monodictyphenone via several steps involving mdpB, mdpC mdpJ, mdpK and mdpL. These enzymes with xptA, xptB and xptC are also proposed to be involved in the synthesis of shamixanthone from emodin. Especially, direct reduction of emodin by the short chain dehydrogenase mdpC followed by dehydration catalyzed by the scytalone dehydratase-like protein mdpB gives loss of oxygen and formation of chrysophanol intermediate in two simple steps. This Emericella nidulans (strain FGSC A4 / ATCC 38163 / CBS 112.46 / NRRL 194 / M139) (Aspergillus nidulans) protein is Scytalone dehydratase-like protein mdpB.